The sequence spans 454 residues: tRNA modification GTPase MnmE (454 aa).

(6S)-5-formyl-5,6,7,8-tetrahydrofolate contacts are provided by Arg-23, Glu-80, and Lys-120. The TrmE-type G domain maps to 216 to 377 (GMKVVIAGRP…LRNHLKQSMG (162 aa)). A K(+)-binding site is contributed by Asn-226. GTP-binding positions include 226–231 (NAGKSS), 245–251 (TDIAGTT), 270–273 (DTAG), 335–338 (NKAD), and 358–360 (SAR). Ser-230 contacts Mg(2+). Residues Thr-245, Ile-247, and Thr-250 each contribute to the K(+) site. Mg(2+) is bound at residue Thr-251. (6S)-5-formyl-5,6,7,8-tetrahydrofolate is bound at residue Lys-454.

Belongs to the TRAFAC class TrmE-Era-EngA-EngB-Septin-like GTPase superfamily. TrmE GTPase family. As to quaternary structure, homodimer. Heterotetramer of two MnmE and two MnmG subunits. It depends on K(+) as a cofactor.

It localises to the cytoplasm. Exhibits a very high intrinsic GTPase hydrolysis rate. Involved in the addition of a carboxymethylaminomethyl (cmnm) group at the wobble position (U34) of certain tRNAs, forming tRNA-cmnm(5)s(2)U34. The sequence is that of tRNA modification GTPase MnmE from Shigella dysenteriae serotype 1 (strain Sd197).